The chain runs to 448 residues: MSASAVNVTPGRNVVVVGTQWGDEGKGKIVDWLTDHAQGVVRFQGGHNAGHTLIIGGKKTILRLIPSGIMREGVACYIGNGVVLSPEALFKEIGELEEAGLSVRERLFISEATTLILPYHVAIDQAREARRGAGKIGTTGRGIGPAYEDKVGRRALRVQDLFDARTFADRLRENLDFHNFVLTQYLGGAAVDFQATLDTMLGYADRLKPMVTDVSRRLYEENHAGRNLLFEGAQGTLLDIDHGTYPFVTSSNCVAGAAAAGAGVGPQKLDYILGITKAYCTRVGSGPFPSELYDADNPSRQDQIGITLANVGKEFGSVTGRPRRTGWLDAAALRRSIQINGVSGLCMTKLDVLDGLDEVKLCVGYKIDGEDVDLLPRGAAEVARCEPVYETFGGWKESTVGIDSWDALPANARAYLTRVQEVAGVPIDMVSTGPDRDETILLRHPFKV.

GTP-binding positions include 22–28 and 50–52; these read GDEGKGK and GHT. The active-site Proton acceptor is the D23. 2 residues coordinate Mg(2+): D23 and G50. Residues 23-26, 48-51, T139, R153, Q234, T249, and R321 contribute to the IMP site; these read DEGK and NAGH. Residue H51 is the Proton donor of the active site. 317 to 323 lines the substrate pocket; the sequence is SVTGRPR. GTP contacts are provided by residues R323, 349 to 351, and 431 to 433; these read KLD and STG.

The protein belongs to the adenylosuccinate synthetase family. In terms of assembly, homodimer. It depends on Mg(2+) as a cofactor.

The protein resides in the cytoplasm. The catalysed reaction is IMP + L-aspartate + GTP = N(6)-(1,2-dicarboxyethyl)-AMP + GDP + phosphate + 2 H(+). It participates in purine metabolism; AMP biosynthesis via de novo pathway; AMP from IMP: step 1/2. In terms of biological role, plays an important role in the de novo pathway of purine nucleotide biosynthesis. Catalyzes the first committed step in the biosynthesis of AMP from IMP. The protein is Adenylosuccinate synthetase of Burkholderia pseudomallei (strain 1106a).